A 210-amino-acid chain; its full sequence is uncharacterized protein (210 aa).

6 consecutive transmembrane segments (helical) span residues 9-29 (WVVT…IIAK), 35-55 (LIVN…MAWP), 64-84 (GPAV…VVAV), 91-111 (GLYG…AAMN), 149-169 (IWFS…AVFW), and 190-210 (IGQA…LFPV).

The protein resides in the cell membrane. This is an uncharacterized protein from Mycobacterium bovis (strain ATCC BAA-935 / AF2122/97).